A 167-amino-acid chain; its full sequence is Sperm acrosome membrane-associated protein 3 (167 aa).

The Cytoplasmic segment spans residues 1-63 (MVSALREAPL…EARSRALRRR (63 aa)). The chain crosses the membrane as a helical; Signal-anchor for type II membrane protein span at residues 64-84 (WCPAGIILLALISLLSCLLPA). Residues 85–167 (SEAKVYGRCE…VPNVCQMYCS (83 aa)) are Extracellular-facing. A C-type lysozyme domain is found at 88–167 (KVYGRCELAR…VPNVCQMYCS (80 aa)). Residues C151 and C166 are joined by a disulfide bond.

Belongs to the glycosyl hydrolase 22 family. As to quaternary structure, interacts with ASTL. Post-translationally, the processed form derives from the membrane form by proteolytic processing.

The protein localises to the cytoplasmic vesicle. Its subcellular location is the secretory vesicle. It is found in the acrosome membrane. Sperm surface membrane protein that may be involved in sperm-egg plasma membrane adhesion and fusion during fertilization. It could be a potential receptor for the egg oligosaccharide residue N-acetylglucosamine, which is present in the extracellular matrix over the egg plasma membrane. The processed form has no detectable bacteriolytic activity in vitro. The sequence is that of Sperm acrosome membrane-associated protein 3 (SPACA3) from Pongo pygmaeus (Bornean orangutan).